Here is a 353-residue protein sequence, read N- to C-terminus: Serine proteinase inhibitor 1 (353 aa).

Belongs to the serpin family. Poxviruses subfamily.

It localises to the host cytoplasm. Plays a role in mediating viral host range. May act to inhibit a caspase independent form of apoptosis to allow efficient virus replication in infected cells. The sequence is that of Serine proteinase inhibitor 1 (OPG208) from Vaccinia virus (strain Western Reserve) (VACV).